Here is a 485-residue protein sequence, read N- to C-terminus: Glutamyl-tRNA(Gln) amidotransferase subunit A (485 aa).

Residues K79 and S154 each act as charge relay system in the active site. The Acyl-ester intermediate role is filled by S178.

It belongs to the amidase family. GatA subfamily. As to quaternary structure, heterotrimer of A, B and C subunits.

It carries out the reaction L-glutamyl-tRNA(Gln) + L-glutamine + ATP + H2O = L-glutaminyl-tRNA(Gln) + L-glutamate + ADP + phosphate + H(+). Allows the formation of correctly charged Gln-tRNA(Gln) through the transamidation of misacylated Glu-tRNA(Gln) in organisms which lack glutaminyl-tRNA synthetase. The reaction takes place in the presence of glutamine and ATP through an activated gamma-phospho-Glu-tRNA(Gln). This chain is Glutamyl-tRNA(Gln) amidotransferase subunit A, found in Staphylococcus aureus (strain USA300 / TCH1516).